The chain runs to 158 residues: Large ribosomal subunit protein uL15 (158 aa).

The span at 1-13 (MKLNEIKDNEGST) shows a compositional bias: basic and acidic residues. Residues 1–44 (MKLNEIKDNEGSTHSRKRLGRGIGSGSGKTAGRGVKGQKSRSGV) form a disordered region. The span at 21–35 (RGIGSGSGKTAGRGV) shows a compositional bias: gly residues.

This sequence belongs to the universal ribosomal protein uL15 family. As to quaternary structure, part of the 50S ribosomal subunit.

Functionally, binds to the 23S rRNA. The polypeptide is Large ribosomal subunit protein uL15 (Rhizobium etli (strain ATCC 51251 / DSM 11541 / JCM 21823 / NBRC 15573 / CFN 42)).